The chain runs to 397 residues: Acetate kinase 2 (397 aa).

Asn-8 serves as a coordination point for Mg(2+). Lys-15 is a binding site for ATP. Arg-89 lines the substrate pocket. Asp-146 (proton donor/acceptor) is an active-site residue. ATP-binding positions include 206–210, 281–283, and 329–333; these read HLGNG, DFR, and GVGEN. Mg(2+) is bound at residue Glu-380.

Belongs to the acetokinase family. In terms of assembly, homodimer. Requires Mg(2+) as cofactor. Mn(2+) is required as a cofactor.

Its subcellular location is the cytoplasm. The enzyme catalyses acetate + ATP = acetyl phosphate + ADP. It participates in metabolic intermediate biosynthesis; acetyl-CoA biosynthesis; acetyl-CoA from acetate: step 1/2. In terms of biological role, catalyzes the formation of acetyl phosphate from acetate and ATP. Can also catalyze the reverse reaction. This is Acetate kinase 2 from Listeria monocytogenes serovar 1/2a (strain ATCC BAA-679 / EGD-e).